A 244-amino-acid chain; its full sequence is B3 domain-containing protein At2g36080 (244 aa).

Residues 38–144 constitute a DNA-binding region (TF-B3); it reads FEKPLTPSDV…RFFIGWRRRG (107 aa).

Its subcellular location is the nucleus. The sequence is that of B3 domain-containing protein At2g36080 (ARF31) from Arabidopsis thaliana (Mouse-ear cress).